A 332-amino-acid chain; its full sequence is Large ribosomal subunit protein uL10 (332 aa).

A disordered region spans residues 294 to 332; the sequence is QAAAAPVAVEDNTEEPEEEEEEEEDAAESAAAGLGALFG. A compositionally biased stretch (acidic residues) spans 304–320; sequence DNTEEPEEEEEEEEDAA.

This sequence belongs to the universal ribosomal protein uL10 family. In terms of assembly, part of the 50S ribosomal subunit. Forms part of the ribosomal stalk which helps the ribosome interact with GTP-bound translation factors. Forms a heptameric L10(L12)2(L12)2(L12)2 complex, where L10 forms an elongated spine to which the L12 dimers bind in a sequential fashion.

Forms part of the ribosomal stalk, playing a central role in the interaction of the ribosome with GTP-bound translation factors. The chain is Large ribosomal subunit protein uL10 from Methanosphaera stadtmanae (strain ATCC 43021 / DSM 3091 / JCM 11832 / MCB-3).